We begin with the raw amino-acid sequence, 453 residues long: Serine protease HTRA3 (453 aa).

Residues 1–17 (MQARALLLAALAALALA) form the signal peptide. The 64-residue stretch at 21-84 (PAAPCPARCD…ECVRGLCRCR (64 aa)) folds into the IGFBP N-terminal domain. 8 cysteine pairs are disulfide-bonded: Cys25-Cys48, Cys29-Cys50, Cys34-Cys51, Cys39-Cys54, Cys62-Cys76, Cys70-Cys81, Cys83-Cys101, and Cys90-Cys126. Residues 64-128 (GPLDSPCGES…RQLQKGACPL (65 aa)) enclose the Kazal-like domain. The interval 175–340 (GSGFIMSEAG…AIPSDRITRF (166 aa)) is serine protease. Catalysis depends on charge relay system residues His191, Asp227, and Ser305. The region spanning 359–444 (IRMRTITPSL…EVRRGNDDLL (86 aa)) is the PDZ domain.

It belongs to the peptidase S1C family. As to quaternary structure, homotrimer. Interacts with TGFB1; the interaction inhibits TGFB-mediated signaling. Interacts with BMP4; the interaction inhibits BMP4-mediated signaling. Interacts with TGFB2 and GDF5. Interacts with MYH9. As to expression, widely expressed, with highest levels in both adult and fetal heart, ovary, uterus placenta, and bladder. In the endometrium, expressed in epithelial glands and the stroma. Also present in leukocytes. Isoform 1 is predominant in heart and skeletal muscle, whereas isoform 2 is predominant in placenta and kidney.

The protein localises to the secreted. In terms of biological role, serine protease that cleaves beta-casein/CSN2 as well as several extracellular matrix (ECM) proteoglycans such as decorin/DCN, biglycan/BGN and fibronectin/FN1. Inhibits signaling mediated by TGF-beta family proteins possibly indirectly by degradation of these ECM proteoglycans. May act as a tumor suppressor. Negatively regulates, in vitro, trophoblast invasion during placental development and may be involved in the development of the placenta in vivo. May also have a role in ovarian development, granulosa cell differentiation and luteinization. This is Serine protease HTRA3 (HTRA3) from Homo sapiens (Human).